The primary structure comprises 438 residues: Hydrogenobyrinate a,c-diamide synthase (438 aa).

The 192-residue stretch at 247 to 438 (RIALAEDAAF…TFFHAIAKGG (192 aa)) folds into the GATase cobBQ-type domain. C329 functions as the Nucleophile in the catalytic mechanism.

Belongs to the CobB/CbiA family. Requires Mg(2+) as cofactor.

It carries out the reaction hydrogenobyrinate + 2 L-glutamine + 2 ATP + 2 H2O = hydrogenobyrinate a,c-diamide + 2 L-glutamate + 2 ADP + 2 phosphate + 2 H(+). Its pathway is cofactor biosynthesis; adenosylcobalamin biosynthesis; cob(II)yrinate a,c-diamide from precorrin-2 (aerobic route): step 9/10. Functionally, catalyzes the ATP-dependent amidation of the two carboxylate groups at positions a and c of hydrogenobyrinate, using either L-glutamine or ammonia as the nitrogen source. This is Hydrogenobyrinate a,c-diamide synthase from Agrobacterium fabrum (strain C58 / ATCC 33970) (Agrobacterium tumefaciens (strain C58)).